The sequence spans 152 residues: Phosphoribosyl-AMP cyclohydrolase (152 aa).

Mg(2+) is bound at residue Asp-92. Cys-93 contributes to the Zn(2+) binding site. Positions 94 and 96 each coordinate Mg(2+). Cys-111 and Cys-118 together coordinate Zn(2+).

The protein belongs to the PRA-CH family. In terms of assembly, homodimer. Requires Mg(2+) as cofactor. Zn(2+) serves as cofactor.

It localises to the cytoplasm. The enzyme catalyses 1-(5-phospho-beta-D-ribosyl)-5'-AMP + H2O = 1-(5-phospho-beta-D-ribosyl)-5-[(5-phospho-beta-D-ribosylamino)methylideneamino]imidazole-4-carboxamide. It functions in the pathway amino-acid biosynthesis; L-histidine biosynthesis; L-histidine from 5-phospho-alpha-D-ribose 1-diphosphate: step 3/9. In terms of biological role, catalyzes the hydrolysis of the adenine ring of phosphoribosyl-AMP. This Sinorhizobium fredii (strain NBRC 101917 / NGR234) protein is Phosphoribosyl-AMP cyclohydrolase.